A 260-amino-acid chain; its full sequence is ATP synthase subunit a (260 aa).

Helical transmembrane passes span 27 to 47 (FWTVNIDSMIFSVLLGALFIW), 90 to 110 (IAPLGLTVFVWIFLMNLMDLI), 132 to 154 (SADVNITMSMALGVFFLILYYSI), 208 to 228 (LIFILIAGLLPWWSQWILSVP), and 230 to 250 (AIFHILIITLQAFIFMVLTIV).

This sequence belongs to the ATPase A chain family. F-type ATPases have 2 components, CF(1) - the catalytic core - and CF(0) - the membrane proton channel. CF(1) has five subunits: alpha(3), beta(3), gamma(1), delta(1), epsilon(1). CF(0) has three main subunits: a(1), b(2) and c(9-12). The alpha and beta chains form an alternating ring which encloses part of the gamma chain. CF(1) is attached to CF(0) by a central stalk formed by the gamma and epsilon chains, while a peripheral stalk is formed by the delta and b chains.

It localises to the cell inner membrane. Key component of the proton channel; it plays a direct role in the translocation of protons across the membrane. The sequence is that of ATP synthase subunit a from Aeromonas hydrophila subsp. hydrophila (strain ATCC 7966 / DSM 30187 / BCRC 13018 / CCUG 14551 / JCM 1027 / KCTC 2358 / NCIMB 9240 / NCTC 8049).